We begin with the raw amino-acid sequence, 445 residues long: UDP-N-acetylmuramoylalanine--D-glutamate ligase (445 aa).

An ATP-binding site is contributed by 117 to 123 (GSNGKTT).

Belongs to the MurCDEF family.

Its subcellular location is the cytoplasm. The catalysed reaction is UDP-N-acetyl-alpha-D-muramoyl-L-alanine + D-glutamate + ATP = UDP-N-acetyl-alpha-D-muramoyl-L-alanyl-D-glutamate + ADP + phosphate + H(+). Its pathway is cell wall biogenesis; peptidoglycan biosynthesis. In terms of biological role, cell wall formation. Catalyzes the addition of glutamate to the nucleotide precursor UDP-N-acetylmuramoyl-L-alanine (UMA). In Neisseria meningitidis serogroup B (strain ATCC BAA-335 / MC58), this protein is UDP-N-acetylmuramoylalanine--D-glutamate ligase.